Reading from the N-terminus, the 640-residue chain is Probable potassium transport system protein Kup 2 (640 aa).

A run of 12 helical transmembrane segments spans residues 19–39 (LFSS…YGDI), 67–87 (VLSL…VVFV), 118–138 (GVVA…GVIT), 155–175 (EAAK…LFLV), 181–201 (GVIG…IAAL), 230–250 (FVGV…EALY), 265–285 (WLGL…ALLL), 307–327 (MVCL…SGVF), 355–375 (VYIP…VLVF), 384–404 (AYGI…FFVI), 415–435 (AVPL…ANLF), and 437–457 (IFDG…SMIT).

It belongs to the HAK/KUP transporter (TC 2.A.72) family.

It is found in the cell inner membrane. The catalysed reaction is K(+)(in) + H(+)(in) = K(+)(out) + H(+)(out). Its function is as follows. Transport of potassium into the cell. Likely operates as a K(+):H(+) symporter. This Syntrophobacter fumaroxidans (strain DSM 10017 / MPOB) protein is Probable potassium transport system protein Kup 2.